Here is a 735-residue protein sequence, read N- to C-terminus: Photosystem I P700 chlorophyll a apoprotein A2 (735 aa).

A run of 8 helical transmembrane segments spans residues 47–70, 136–159, 176–200, 274–292, 331–354, 370–396, 418–440, and 518–536; these read IFASHFGQLSIIFLWTSGNLFHVA, LYNGSLFLSILSALFLLAGWLHLQ, LNHHLSGLFGISSLAWTGHLVHVAI, MAHHHLAIAVIFVLAGHMY, LHFQLGLALASVGTICSLVAQHMY, AALYTHHQYIASFIICGAFAHGAIFFI, AIISHLSWVSLFLGFHTLGLYVH, and FLVHHAIALGLHTTTLILV. Cys560 and Cys569 together coordinate [4Fe-4S] cluster. The next 2 helical transmembrane spans lie at 576–597 and 644–666; these read AFYLSIFWSLNTVGWVTFYWHW and LSVWAWVFLFGHLIYATGFMFLI. His655, Met663, and Tyr671 together coordinate chlorophyll a. Residue Trp672 participates in phylloquinone binding. Residues 708–728 traverse the membrane as a helical segment; the sequence is LVGLVHFSVGYIFTYAAFLIA.

This sequence belongs to the PsaA/PsaB family. As to quaternary structure, the PsaA/B heterodimer binds the P700 chlorophyll special pair and subsequent electron acceptors. PSI consists of a core antenna complex that captures photons, and an electron transfer chain that converts photonic excitation into a charge separation. The eukaryotic PSI reaction center is composed of at least 11 subunits. P700 is a chlorophyll a/chlorophyll a' dimer, A0 is one or more chlorophyll a, A1 is one or both phylloquinones and FX is a shared 4Fe-4S iron-sulfur center. is required as a cofactor.

Its subcellular location is the plastid. It is found in the chloroplast thylakoid membrane. The enzyme catalyses reduced [plastocyanin] + hnu + oxidized [2Fe-2S]-[ferredoxin] = oxidized [plastocyanin] + reduced [2Fe-2S]-[ferredoxin]. Its function is as follows. PsaA and PsaB bind P700, the primary electron donor of photosystem I (PSI), as well as the electron acceptors A0, A1 and FX. PSI is a plastocyanin/cytochrome c6-ferredoxin oxidoreductase, converting photonic excitation into a charge separation, which transfers an electron from the donor P700 chlorophyll pair to the spectroscopically characterized acceptors A0, A1, FX, FA and FB in turn. Oxidized P700 is reduced on the lumenal side of the thylakoid membrane by plastocyanin or cytochrome c6. The polypeptide is Photosystem I P700 chlorophyll a apoprotein A2 (Stigeoclonium helveticum (Green alga)).